A 295-amino-acid polypeptide reads, in one-letter code: Glutamyl-Q tRNA(Asp) synthetase (295 aa).

Residues 5-9 and glutamate 41 each bind L-glutamate; that span reads RFAPS. The 'HIGH' region motif lies at 8 to 18; sequence PSPTGLLHIGS. Zn(2+)-binding residues include cysteine 97, cysteine 99, tyrosine 117, and cysteine 121. L-glutamate-binding residues include tyrosine 178 and arginine 196. Residues 234–238 carry the 'KMSKS' region motif; sequence KWSKQ. ATP is bound at residue lysine 237.

Belongs to the class-I aminoacyl-tRNA synthetase family. GluQ subfamily. Zn(2+) is required as a cofactor.

In terms of biological role, catalyzes the tRNA-independent activation of glutamate in presence of ATP and the subsequent transfer of glutamate onto a tRNA(Asp). Glutamate is transferred on the 2-amino-5-(4,5-dihydroxy-2-cyclopenten-1-yl) moiety of the queuosine in the wobble position of the QUC anticodon. This is Glutamyl-Q tRNA(Asp) synthetase from Neisseria meningitidis serogroup B (strain ATCC BAA-335 / MC58).